We begin with the raw amino-acid sequence, 498 residues long: Cytochrome P450 71B5 (498 aa).

Residues 3 to 23 form a helical membrane-spanning segment; the sequence is IFLCFLLLLPLSLIFLKKLLP. Cys-439 lines the heme pocket.

The protein belongs to the cytochrome P450 family. Heme serves as cofactor.

The protein resides in the membrane. This chain is Cytochrome P450 71B5 (CYP71B5), found in Arabidopsis thaliana (Mouse-ear cress).